Here is a 258-residue protein sequence, read N- to C-terminus: Imidazole glycerol phosphate synthase subunit HisF (258 aa).

Catalysis depends on residues aspartate 11 and aspartate 130.

Belongs to the HisA/HisF family. As to quaternary structure, heterodimer of HisH and HisF.

The protein localises to the cytoplasm. The enzyme catalyses 5-[(5-phospho-1-deoxy-D-ribulos-1-ylimino)methylamino]-1-(5-phospho-beta-D-ribosyl)imidazole-4-carboxamide + L-glutamine = D-erythro-1-(imidazol-4-yl)glycerol 3-phosphate + 5-amino-1-(5-phospho-beta-D-ribosyl)imidazole-4-carboxamide + L-glutamate + H(+). It participates in amino-acid biosynthesis; L-histidine biosynthesis; L-histidine from 5-phospho-alpha-D-ribose 1-diphosphate: step 5/9. Functionally, IGPS catalyzes the conversion of PRFAR and glutamine to IGP, AICAR and glutamate. The HisF subunit catalyzes the cyclization activity that produces IGP and AICAR from PRFAR using the ammonia provided by the HisH subunit. In Yersinia pseudotuberculosis serotype IB (strain PB1/+), this protein is Imidazole glycerol phosphate synthase subunit HisF.